The following is an 847-amino-acid chain: Phenylalanine--tRNA ligase beta subunit (847 aa).

Residues 40–168 (FGIEGPVVVG…LDPEVGADAV (129 aa)) enclose the tRNA-binding domain. The 76-residue stretch at 426–501 (ADAEPIRLPD…RIVGFDRIPS (76 aa)) folds into the B5 domain. Mg(2+)-binding residues include D479, D485, E488, and E489. The region spanning 753-846 (AGFPAATQDL…AGQLFGAAIR (94 aa)) is the FDX-ACB domain.

The protein belongs to the phenylalanyl-tRNA synthetase beta subunit family. Type 1 subfamily. Tetramer of two alpha and two beta subunits. It depends on Mg(2+) as a cofactor.

It localises to the cytoplasm. It carries out the reaction tRNA(Phe) + L-phenylalanine + ATP = L-phenylalanyl-tRNA(Phe) + AMP + diphosphate + H(+). The protein is Phenylalanine--tRNA ligase beta subunit of Leifsonia xyli subsp. xyli (strain CTCB07).